A 306-amino-acid polypeptide reads, in one-letter code: Ornithine carbamoyltransferase (306 aa).

Carbamoyl phosphate is bound by residues 51-54, Gln78, Arg102, and 129-132; these read STRT and HPCQ. L-ornithine-binding positions include Asn160, Asp223, and 227–228; that span reads SM. Carbamoyl phosphate is bound by residues 263–264 and Arg291; that span reads CL.

It belongs to the aspartate/ornithine carbamoyltransferase superfamily. OTCase family.

The protein localises to the cytoplasm. It catalyses the reaction carbamoyl phosphate + L-ornithine = L-citrulline + phosphate + H(+). Its pathway is amino-acid biosynthesis; L-arginine biosynthesis; L-arginine from L-ornithine and carbamoyl phosphate: step 1/3. Reversibly catalyzes the transfer of the carbamoyl group from carbamoyl phosphate (CP) to the N(epsilon) atom of ornithine (ORN) to produce L-citrulline. The sequence is that of Ornithine carbamoyltransferase from Nostoc sp. (strain PCC 7120 / SAG 25.82 / UTEX 2576).